The following is a 455-amino-acid chain: Bifunctional protein GlmU (455 aa).

The pyrophosphorylase stretch occupies residues 1 to 226 (MSLEIVILAA…PMEVQGANDR (226 aa)). Residues 8-11 (LAAG), Lys22, Gln73, 78-79 (GT), 99-101 (YGD), Gly136, Glu151, Asn166, and Asn224 contribute to the UDP-N-acetyl-alpha-D-glucosamine site. Asp101 is a binding site for Mg(2+). A Mg(2+)-binding site is contributed by Asn224. The tract at residues 227-247 (KQLSELERHYQLRAGRRLMAQ) is linker. The tract at residues 248–455 (GVTLRDPARF…WKRPEKIKKN (208 aa)) is N-acetyltransferase. Positions 330 and 348 each coordinate UDP-N-acetyl-alpha-D-glucosamine. Catalysis depends on His360, which acts as the Proton acceptor. Positions 363 and 374 each coordinate UDP-N-acetyl-alpha-D-glucosamine. Residues Ala377, 383–384 (NY), Ser402, Ala420, and Arg437 contribute to the acetyl-CoA site.

The protein in the N-terminal section; belongs to the N-acetylglucosamine-1-phosphate uridyltransferase family. It in the C-terminal section; belongs to the transferase hexapeptide repeat family. As to quaternary structure, homotrimer. It depends on Mg(2+) as a cofactor.

The protein resides in the cytoplasm. It catalyses the reaction alpha-D-glucosamine 1-phosphate + acetyl-CoA = N-acetyl-alpha-D-glucosamine 1-phosphate + CoA + H(+). It carries out the reaction N-acetyl-alpha-D-glucosamine 1-phosphate + UTP + H(+) = UDP-N-acetyl-alpha-D-glucosamine + diphosphate. It functions in the pathway nucleotide-sugar biosynthesis; UDP-N-acetyl-alpha-D-glucosamine biosynthesis; N-acetyl-alpha-D-glucosamine 1-phosphate from alpha-D-glucosamine 6-phosphate (route II): step 2/2. Its pathway is nucleotide-sugar biosynthesis; UDP-N-acetyl-alpha-D-glucosamine biosynthesis; UDP-N-acetyl-alpha-D-glucosamine from N-acetyl-alpha-D-glucosamine 1-phosphate: step 1/1. The protein operates within bacterial outer membrane biogenesis; LPS lipid A biosynthesis. Functionally, catalyzes the last two sequential reactions in the de novo biosynthetic pathway for UDP-N-acetylglucosamine (UDP-GlcNAc). The C-terminal domain catalyzes the transfer of acetyl group from acetyl coenzyme A to glucosamine-1-phosphate (GlcN-1-P) to produce N-acetylglucosamine-1-phosphate (GlcNAc-1-P), which is converted into UDP-GlcNAc by the transfer of uridine 5-monophosphate (from uridine 5-triphosphate), a reaction catalyzed by the N-terminal domain. This Pseudomonas fluorescens (strain Pf0-1) protein is Bifunctional protein GlmU.